A 308-amino-acid chain; its full sequence is Bifunctional protein FolD (308 aa).

NADP(+) contacts are provided by residues glycine 171 to serine 173, serine 198, and isoleucine 239.

The protein belongs to the tetrahydrofolate dehydrogenase/cyclohydrolase family. Homodimer.

It catalyses the reaction (6R)-5,10-methylene-5,6,7,8-tetrahydrofolate + NADP(+) = (6R)-5,10-methenyltetrahydrofolate + NADPH. It carries out the reaction (6R)-5,10-methenyltetrahydrofolate + H2O = (6R)-10-formyltetrahydrofolate + H(+). The protein operates within one-carbon metabolism; tetrahydrofolate interconversion. Functionally, catalyzes the oxidation of 5,10-methylenetetrahydrofolate to 5,10-methenyltetrahydrofolate and then the hydrolysis of 5,10-methenyltetrahydrofolate to 10-formyltetrahydrofolate. The polypeptide is Bifunctional protein FolD (Borreliella burgdorferi (strain ATCC 35210 / DSM 4680 / CIP 102532 / B31) (Borrelia burgdorferi)).